Consider the following 350-residue polypeptide: Putative ATP-binding protein BRA0745/BS1330_II0738 (350 aa).

An ABC transporter domain is found at 4–234; sequence VSLRGISKTF…PANKFVAGFI (231 aa). 36-43 is a binding site for ATP; sequence GPSGCGKS.

This sequence belongs to the ABC transporter superfamily. As to quaternary structure, the complex is composed of two ATP-binding proteins (BRA0745), two transmembrane proteins (BRA0749) and a solute-binding protein (BRA0748).

It localises to the cell inner membrane. Functionally, probably part of an ABC transporter complex. Probably responsible for energy coupling to the transport system. In Brucella suis biovar 1 (strain 1330), this protein is Putative ATP-binding protein BRA0745/BS1330_II0738.